We begin with the raw amino-acid sequence, 67 residues long: Large ribosomal subunit protein bL32c (67 aa).

Belongs to the bacterial ribosomal protein bL32 family.

It localises to the plastid. It is found in the chloroplast. The sequence is that of Large ribosomal subunit protein bL32c from Chara vulgaris (Common stonewort).